The primary structure comprises 536 residues: T-complex protein 1 subunit delta (536 aa).

A disordered region spans residues 1 to 21; that stretch reads MAAVAAPMASKPRGSKAESFV.

Belongs to the TCP-1 chaperonin family. Heterooligomeric complex of about 850 to 900 kDa that forms two stacked rings, 12 to 16 nm in diameter.

It is found in the cytoplasm. Molecular chaperone; assists the folding of proteins upon ATP hydrolysis. Known to play a role, in vitro, in the folding of actin and tubulin. The protein is T-complex protein 1 subunit delta of Arabidopsis thaliana (Mouse-ear cress).